A 372-amino-acid polypeptide reads, in one-letter code: Flap endonuclease 1 (372 aa).

Residues 1-105 form an N-domain region; that stretch reads MGVKGLNQLI…GELEKRLLRR (105 aa). Asp-34 provides a ligand contact to Mg(2+). DNA-binding residues include Arg-47 and Arg-71. Mg(2+) is bound by residues Asp-87, Glu-159, Glu-161, Asp-180, and Asp-182. Residues 123–254 are I-domain; that stretch reads EVLKFEKRLV…ATAFKLIKEH (132 aa). Position 159 (Glu-159) interacts with DNA. Residues Gly-232 and Asp-234 each contribute to the DNA site. Residue Asp-234 coordinates Mg(2+). The interval 339-347 is interaction with PCNA; sequence VQGRLDGFF.

This sequence belongs to the XPG/RAD2 endonuclease family. FEN1 subfamily. In terms of assembly, interacts with PCNA. Three molecules of RAD27 bind to one PCNA trimer with each molecule binding to one PCNA monomer. PCNA stimulates the nuclease activity without altering cleavage specificity. The cofactor is Mg(2+). In terms of processing, phosphorylated. Phosphorylation upon DNA damage induces relocalization to the nuclear plasma.

Its subcellular location is the nucleus. It is found in the nucleolus. It localises to the nucleoplasm. The protein resides in the mitochondrion. In terms of biological role, structure-specific nuclease with 5'-flap endonuclease and 5'-3' exonuclease activities involved in DNA replication and repair. During DNA replication, cleaves the 5'-overhanging flap structure that is generated by displacement synthesis when DNA polymerase encounters the 5'-end of a downstream Okazaki fragment. It enters the flap from the 5'-end and then tracks to cleave the flap base, leaving a nick for ligation. Also involved in the long patch base excision repair (LP-BER) pathway, by cleaving within the apurinic/apyrimidinic (AP) site-terminated flap. Acts as a genome stabilization factor that prevents flaps from equilibrating into structures that lead to duplications and deletions. Also possesses 5'-3' exonuclease activity on nicked or gapped double-stranded DNA, and exhibits RNase H activity. Also involved in replication and repair of rDNA and in repairing mitochondrial DNA. The chain is Flap endonuclease 1 from Candida dubliniensis (strain CD36 / ATCC MYA-646 / CBS 7987 / NCPF 3949 / NRRL Y-17841) (Yeast).